A 459-amino-acid polypeptide reads, in one-letter code: Chromosomal replication initiator protein DnaA (459 aa).

The domain I, interacts with DnaA modulators stretch occupies residues 1 to 73 (MEIPIESLWS…AHAVQDILGH (73 aa)). Positions 73–117 (HPVGIYITVAQGDEVSHFSEREVSWESTNPSSIPESLPHHNHKTT) are domain II. Residues 118–334 (ELNSKYVFSR…GALIRAVAYI (217 aa)) form a domain III, AAA+ region region. Residues glycine 162, glycine 164, lysine 165, and threonine 166 each coordinate ATP. Positions 335–459 (SIWGLPMTVE…INMTSRSQKS (125 aa)) are domain IV, binds dsDNA.

It belongs to the DnaA family. Oligomerizes as a right-handed, spiral filament on DNA at oriC.

The protein resides in the cytoplasm. Functionally, plays an essential role in the initiation and regulation of chromosomal replication. ATP-DnaA binds to the origin of replication (oriC) to initiate formation of the DNA replication initiation complex once per cell cycle. Binds the DnaA box (a 9 base pair repeat at the origin) and separates the double-stranded (ds)DNA. Forms a right-handed helical filament on oriC DNA; dsDNA binds to the exterior of the filament while single-stranded (ss)DNA is stabiized in the filament's interior. The ATP-DnaA-oriC complex binds and stabilizes one strand of the AT-rich DNA unwinding element (DUE), permitting loading of DNA polymerase. After initiation quickly degrades to an ADP-DnaA complex that is not apt for DNA replication. Binds acidic phospholipids. The chain is Chromosomal replication initiator protein DnaA from Nostoc punctiforme (strain ATCC 29133 / PCC 73102).